We begin with the raw amino-acid sequence, 413 residues long: Zinc finger CCCH domain-containing protein 6 (413 aa).

3 disordered regions span residues 28–61 (PSQV…FGGP), 159–191 (DSAS…TLPA), and 333–356 (QPGG…RDSK). Residues 176–189 (PSITDENTSTSSTL) show a composition bias toward polar residues. The segment at 357–385 (PKIMKACMYFNSARGCRHGANCMYQHDAT) adopts a C3H1-type zinc-finger fold. The span at 389–403 (PRNLNNGNINTSDMQ) shows a compositional bias: polar residues. The disordered stretch occupies residues 389 to 413 (PRNLNNGNINTSDMQNAKRMRFDRD).

The sequence is that of Zinc finger CCCH domain-containing protein 6 from Arabidopsis thaliana (Mouse-ear cress).